Here is a 46-residue protein sequence, read N- to C-terminus: Diuretic hormone (46 aa).

I46 bears the Isoleucine amide mark.

Belongs to the sauvagine/corticotropin-releasing factor/urotensin I family.

The protein resides in the secreted. Regulation of fluid secretion. Stimulates primary urine secretion by Malpighian tubules and causes a dose-dependent stimulation of cAMP levels in the tubules. The protein is Diuretic hormone of Periplaneta americana (American cockroach).